Reading from the N-terminus, the 353-residue chain is Photosystem II D2 protein (353 aa).

Threonine 2 bears the N-acetylthreonine mark. Threonine 2 is subject to Phosphothreonine. Residues 41–61 (CAYFALGGWFTGTTFVTSWYT) form a helical membrane-spanning segment. Histidine 118 is a binding site for chlorophyll a. A helical membrane pass occupies residues 125-141 (GFMLRQFELARSVQLRP). Pheophytin a contacts are provided by glutamine 130 and asparagine 143. Residues 153–166 (VFVSVFLIYPLGQS) traverse the membrane as a helical segment. Histidine 198 contributes to the chlorophyll a binding site. The helical transmembrane segment at 208–228 (AALLCAIHGATVENTLFEDGD) threads the bilayer. The a plastoquinone site is built by histidine 215 and phenylalanine 262. Histidine 215 contributes to the Fe cation binding site. Histidine 269 serves as a coordination point for Fe cation. Residues 279–295 (GLWMSAIGVVGLALNLR) form a helical membrane-spanning segment.

It belongs to the reaction center PufL/M/PsbA/D family. PSII is composed of 1 copy each of membrane proteins PsbA, PsbB, PsbC, PsbD, PsbE, PsbF, PsbH, PsbI, PsbJ, PsbK, PsbL, PsbM, PsbT, PsbX, PsbY, PsbZ, Psb30/Ycf12, at least 3 peripheral proteins of the oxygen-evolving complex and a large number of cofactors. It forms dimeric complexes. It depends on The D1/D2 heterodimer binds P680, chlorophylls that are the primary electron donor of PSII, and subsequent electron acceptors. It shares a non-heme iron and each subunit binds pheophytin, quinone, additional chlorophylls, carotenoids and lipids. There is also a Cl(-1) ion associated with D1 and D2, which is required for oxygen evolution. The PSII complex binds additional chlorophylls, carotenoids and specific lipids. as a cofactor.

The protein resides in the plastid. Its subcellular location is the chloroplast thylakoid membrane. It carries out the reaction 2 a plastoquinone + 4 hnu + 2 H2O = 2 a plastoquinol + O2. In terms of biological role, photosystem II (PSII) is a light-driven water:plastoquinone oxidoreductase that uses light energy to abstract electrons from H(2)O, generating O(2) and a proton gradient subsequently used for ATP formation. It consists of a core antenna complex that captures photons, and an electron transfer chain that converts photonic excitation into a charge separation. The D1/D2 (PsbA/PsbD) reaction center heterodimer binds P680, the primary electron donor of PSII as well as several subsequent electron acceptors. D2 is needed for assembly of a stable PSII complex. In Cycas taitungensis (Prince sago), this protein is Photosystem II D2 protein.